The following is a 435-amino-acid chain: ATP-dependent protease ATPase subunit HslU (435 aa).

Residues valine 18, glycine 60–glutamate 65, aspartate 248, glutamate 313, and arginine 385 each bind ATP.

This sequence belongs to the ClpX chaperone family. HslU subfamily. As to quaternary structure, a double ring-shaped homohexamer of HslV is capped on each side by a ring-shaped HslU homohexamer. The assembly of the HslU/HslV complex is dependent on binding of ATP.

Its subcellular location is the cytoplasm. Its function is as follows. ATPase subunit of a proteasome-like degradation complex; this subunit has chaperone activity. The binding of ATP and its subsequent hydrolysis by HslU are essential for unfolding of protein substrates subsequently hydrolyzed by HslV. HslU recognizes the N-terminal part of its protein substrates and unfolds these before they are guided to HslV for hydrolysis. The sequence is that of ATP-dependent protease ATPase subunit HslU from Xanthobacter autotrophicus (strain ATCC BAA-1158 / Py2).